The chain runs to 520 residues: Arabinose import ATP-binding protein AraG (520 aa).

Over residues 1–10 the composition is skewed to polar residues; that stretch reads MTTQTMTAVS. The segment at 1-27 is disordered; that stretch reads MTTQTMTAVSGNDGDTGGDAAESPPGG. 2 ABC transporter domains span residues 30–265 and 265–516; these read LALD…MVGR and RSIE…LIKL. An ATP-binding site is contributed by 62-69; sequence GENGAGKS.

Belongs to the ABC transporter superfamily. Arabinose importer (TC 3.A.1.2.2) family. In terms of assembly, the complex is composed of two ATP-binding proteins (AraG), two transmembrane proteins (AraH) and a solute-binding protein (AraF).

The protein localises to the cell inner membrane. It catalyses the reaction L-arabinose(out) + ATP + H2O = L-arabinose(in) + ADP + phosphate + H(+). Part of the ABC transporter complex AraFGH involved in L-arabinose import. Responsible for energy coupling to the transport system. This is Arabinose import ATP-binding protein AraG from Azospirillum brasilense.